Reading from the N-terminus, the 143-residue chain is Transcriptional regulator SlyA (143 aa).

Residues 2-135 (ESTLGSDLAR…LSGLIDKLER (134 aa)) form the HTH marR-type domain. A DNA-binding region (H-T-H motif) is located at residues 49-72 (QIQLAKAIGIEQPSLVRTLDQLEE).

The protein belongs to the SlyA family. In terms of assembly, homodimer.

Transcription regulator that can specifically activate or repress expression of target genes. The sequence is that of Transcriptional regulator SlyA from Yersinia enterocolitica serotype O:8 / biotype 1B (strain NCTC 13174 / 8081).